The chain runs to 353 residues: Nicotinate-nucleotide--dimethylbenzimidazole phosphoribosyltransferase (353 aa).

The active-site Proton acceptor is Glu320.

The protein belongs to the CobT family.

It carries out the reaction 5,6-dimethylbenzimidazole + nicotinate beta-D-ribonucleotide = alpha-ribazole 5'-phosphate + nicotinate + H(+). The protein operates within nucleoside biosynthesis; alpha-ribazole biosynthesis; alpha-ribazole from 5,6-dimethylbenzimidazole: step 1/2. Catalyzes the synthesis of alpha-ribazole-5'-phosphate from nicotinate mononucleotide (NAMN) and 5,6-dimethylbenzimidazole (DMB). The polypeptide is Nicotinate-nucleotide--dimethylbenzimidazole phosphoribosyltransferase (Pseudoalteromonas translucida (strain TAC 125)).